The chain runs to 145 residues: Large-conductance mechanosensitive channel (145 aa).

The next 2 helical transmembrane spans lie at 14–34 (VIDL…VDSL) and 81–101 (GIFI…FLMV).

It belongs to the MscL family. Homopentamer.

The protein localises to the cell inner membrane. Its function is as follows. Channel that opens in response to stretch forces in the membrane lipid bilayer. May participate in the regulation of osmotic pressure changes within the cell. This is Large-conductance mechanosensitive channel from Pelobacter propionicus (strain DSM 2379 / NBRC 103807 / OttBd1).